We begin with the raw amino-acid sequence, 247 residues long: 2,3-bisphosphoglycerate-dependent phosphoglycerate mutase (247 aa).

Substrate contacts are provided by residues 8–15, 21–22, R60, 87–90, K98, 114–115, and 183–184; these read RHGESQWN, TG, ERHY, RR, and GN. H9 serves as the catalytic Tele-phosphohistidine intermediate. E87 acts as the Proton donor/acceptor in catalysis.

This sequence belongs to the phosphoglycerate mutase family. BPG-dependent PGAM subfamily.

It carries out the reaction (2R)-2-phosphoglycerate = (2R)-3-phosphoglycerate. It functions in the pathway carbohydrate degradation; glycolysis; pyruvate from D-glyceraldehyde 3-phosphate: step 3/5. Catalyzes the interconversion of 2-phosphoglycerate and 3-phosphoglycerate. The protein is 2,3-bisphosphoglycerate-dependent phosphoglycerate mutase of Chlorobaculum tepidum (strain ATCC 49652 / DSM 12025 / NBRC 103806 / TLS) (Chlorobium tepidum).